We begin with the raw amino-acid sequence, 293 residues long: Cell division protein FtsQ (293 aa).

The Cytoplasmic segment spans residues 1–29; the sequence is MSQVRSKSQQGKRQAKPQEVVPATILTEQ. A helical membrane pass occupies residues 30 to 52; the sequence is LSTYAFGTVTAGAVMVAVAAWMG. The Periplasmic segment spans residues 53-293; sequence GSLASIDERI…SQIDDKSGGA (241 aa). The POTRA domain maps to 75–144; the sequence is FTVTKISIEG…NDIWILAENR (70 aa).

The protein belongs to the FtsQ/DivIB family. FtsQ subfamily.

The protein resides in the cell inner membrane. Functionally, essential cell division protein. The protein is Cell division protein FtsQ of Hirschia baltica (strain ATCC 49814 / DSM 5838 / IFAM 1418).